The following is a 1393-amino-acid chain: Rab3 GTPase-activating protein non-catalytic subunit (1393 aa).

The segment at 36 to 67 (RDPSKSTDWEDDGWGAWEENEPQEPEEEGNTC) is disordered. A Phosphoserine modification is found at serine 39. The span at 44 to 64 (WEDDGWGAWEENEPQEPEEEG) shows a compositional bias: acidic residues. Serine 450 carries the post-translational modification Phosphoserine. Phosphothreonine is present on threonine 901. Residues serine 916 and serine 978 each carry the phosphoserine modification.

This sequence belongs to the Rab3-GAP regulatory subunit family. In terms of assembly, the Rab3 GTPase-activating complex is a heterodimer composed of RAB3GAP1 and RAB3GAP2. The Rab3 GTPase-activating complex interacts with DMXL2. Interacts with LMAN1. In terms of tissue distribution, ubiquitous.

Its subcellular location is the cytoplasm. The protein resides in the endoplasmic reticulum. In terms of biological role, regulatory subunit of the Rab3 GTPase-activating (Rab3GAP) complex composed of RAB3GAP1 and RAB3GAP2, which has GTPase-activating protein (GAP) activity towards various Rab3 subfamily members (RAB3A, RAB3B, RAB3C and RAB3D), RAB5A and RAB43, and guanine nucleotide exchange factor (GEF) activity towards RAB18. As part of the Rab3GAP complex, acts as a GAP for Rab3 proteins by converting active RAB3-GTP to the inactive form RAB3-GDP. Rab3 proteins are involved in regulated exocytosis of neurotransmitters and hormones. The Rab3GAP complex acts as a GEF for RAB18 by promoting the conversion of inactive RAB18-GDP to the active form RAB18-GTP. Recruits and stabilizes RAB18 at the cis-Golgi membrane in human fibroblasts where RAB18 is most likely activated. Also involved in RAB18 recruitment at the endoplasmic reticulum (ER) membrane where it maintains proper ER structure. Required for normal eye and brain development. May participate in neurodevelopmental processes such as proliferation, migration and differentiation before synapse formation, and non-synaptic vesicular release of neurotransmitters. The polypeptide is Rab3 GTPase-activating protein non-catalytic subunit (Homo sapiens (Human)).